A 250-amino-acid polypeptide reads, in one-letter code: Adapter protein MecA (250 aa).

The protein belongs to the MecA family. In terms of assembly, homodimer.

In terms of biological role, enables the recognition and targeting of unfolded and aggregated proteins to the ClpC protease or to other proteins involved in proteolysis. The sequence is that of Adapter protein MecA from Streptococcus sanguinis (strain SK36).